A 441-amino-acid chain; its full sequence is Tubulin alpha chain (441 aa).

Glutamine 11, glutamate 68, serine 137, glycine 141, threonine 142, threonine 176, asparagine 203, and asparagine 224 together coordinate GTP. Glutamate 68 is a Mg(2+) binding site. Glutamate 250 is a catalytic residue.

The protein belongs to the tubulin family. In terms of assembly, dimer of alpha and beta chains. A typical microtubule is a hollow water-filled tube with an outer diameter of 25 nm and an inner diameter of 15 nM. Alpha-beta heterodimers associate head-to-tail to form protofilaments running lengthwise along the microtubule wall with the beta-tubulin subunit facing the microtubule plus end conferring a structural polarity. Microtubules usually have 13 protofilaments but different protofilament numbers can be found in some organisms and specialized cells. The cofactor is Mg(2+).

The protein resides in the cytoplasm. It localises to the cytoskeleton. The catalysed reaction is GTP + H2O = GDP + phosphate + H(+). Functionally, tubulin is the major constituent of microtubules, a cylinder consisting of laterally associated linear protofilaments composed of alpha- and beta-tubulin heterodimers. Microtubules grow by the addition of GTP-tubulin dimers to the microtubule end, where a stabilizing cap forms. Below the cap, tubulin dimers are in GDP-bound state, owing to GTPase activity of alpha-tubulin. The sequence is that of Tubulin alpha chain (TUB1) from Encephalitozoon cuniculi (strain GB-M1) (Microsporidian parasite).